Here is a 337-residue protein sequence, read N- to C-terminus: Ketol-acid reductoisomerase (NADP(+)) (337 aa).

In terms of domain architecture, KARI N-terminal Rossmann spans 1-180 (MQVYYDKDAD…GGTKGGVIET (180 aa)). NADP(+) is bound by residues 24 to 27 (YGSQ), Arg-47, and Ser-51. Residue His-106 is part of the active site. Gly-132 provides a ligand contact to NADP(+). A KARI C-terminal knotted domain is found at 181 to 326 (TFREETETDL…AQLRAMMPWI (146 aa)). Mg(2+) is bound by residues Asp-189, Glu-193, Glu-225, and Glu-229. A substrate-binding site is contributed by Ser-250.

This sequence belongs to the ketol-acid reductoisomerase family. Requires Mg(2+) as cofactor.

It catalyses the reaction (2R)-2,3-dihydroxy-3-methylbutanoate + NADP(+) = (2S)-2-acetolactate + NADPH + H(+). The catalysed reaction is (2R,3R)-2,3-dihydroxy-3-methylpentanoate + NADP(+) = (S)-2-ethyl-2-hydroxy-3-oxobutanoate + NADPH + H(+). It functions in the pathway amino-acid biosynthesis; L-isoleucine biosynthesis; L-isoleucine from 2-oxobutanoate: step 2/4. Its pathway is amino-acid biosynthesis; L-valine biosynthesis; L-valine from pyruvate: step 2/4. Functionally, involved in the biosynthesis of branched-chain amino acids (BCAA). Catalyzes an alkyl-migration followed by a ketol-acid reduction of (S)-2-acetolactate (S2AL) to yield (R)-2,3-dihydroxy-isovalerate. In the isomerase reaction, S2AL is rearranged via a Mg-dependent methyl migration to produce 3-hydroxy-3-methyl-2-ketobutyrate (HMKB). In the reductase reaction, this 2-ketoacid undergoes a metal-dependent reduction by NADPH to yield (R)-2,3-dihydroxy-isovalerate. The sequence is that of Ketol-acid reductoisomerase (NADP(+)) from Neisseria meningitidis serogroup A / serotype 4A (strain DSM 15465 / Z2491).